Here is a 437-residue protein sequence, read N- to C-terminus: Putative ankyrin repeat protein FPV014 (437 aa).

ANK repeat units lie at residues 32–61, 65–94, 99–128, 131–160, 164–195, 197–226, and 230–259; these read YGCSLLHCAVENGNTEIARILLLEGANPDL, STPTALHRAVILRHYDIVNLLMEFNVDPDN, ESRTPLEYAVKLNDVKMTKTLLDYGADAED, RFNCPINDAAANGNLEICKLLIDAGARINS, GSVYTIHHAIRSGNYELVVELLSRGALPDVED, LSFSSLHHAVMEGSADMVLTLLEHGASVDV, and CGRTPLFLAANASELDIVKVLLDFWADTSV.

This Fowlpox virus (strain NVSL) (FPV) protein is Putative ankyrin repeat protein FPV014.